A 393-amino-acid chain; its full sequence is Formate-dependent phosphoribosylglycinamide formyltransferase (393 aa).

N(1)-(5-phospho-beta-D-ribosyl)glycinamide contacts are provided by residues 22 to 23 and glutamate 82; that span reads EL. ATP is bound by residues arginine 114, lysine 155, 160-165, 195-198, and glutamate 203; these read SSGKGQ and EGFI. Positions 119–308 constitute an ATP-grasp domain; sequence RLAAEELGLP…EFALHARAIL (190 aa). Residues glutamate 267 and glutamate 279 each contribute to the Mg(2+) site. Residues aspartate 286, lysine 356, and 363 to 364 each bind N(1)-(5-phospho-beta-D-ribosyl)glycinamide; that span reads RR.

It belongs to the PurK/PurT family. As to quaternary structure, homodimer.

It catalyses the reaction N(1)-(5-phospho-beta-D-ribosyl)glycinamide + formate + ATP = N(2)-formyl-N(1)-(5-phospho-beta-D-ribosyl)glycinamide + ADP + phosphate + H(+). It functions in the pathway purine metabolism; IMP biosynthesis via de novo pathway; N(2)-formyl-N(1)-(5-phospho-D-ribosyl)glycinamide from N(1)-(5-phospho-D-ribosyl)glycinamide (formate route): step 1/1. Involved in the de novo purine biosynthesis. Catalyzes the transfer of formate to 5-phospho-ribosyl-glycinamide (GAR), producing 5-phospho-ribosyl-N-formylglycinamide (FGAR). Formate is provided by PurU via hydrolysis of 10-formyl-tetrahydrofolate. The protein is Formate-dependent phosphoribosylglycinamide formyltransferase of Azotobacter vinelandii (strain DJ / ATCC BAA-1303).